The following is a 692-amino-acid chain: Elongation factor G (692 aa).

One can recognise a tr-type G domain in the interval Glu-8–Thr-283. GTP is bound by residues Ala-17–Thr-24, Asp-81–His-85, and Asn-135–Asp-138.

The protein belongs to the TRAFAC class translation factor GTPase superfamily. Classic translation factor GTPase family. EF-G/EF-2 subfamily.

Its subcellular location is the cytoplasm. In terms of biological role, catalyzes the GTP-dependent ribosomal translocation step during translation elongation. During this step, the ribosome changes from the pre-translocational (PRE) to the post-translocational (POST) state as the newly formed A-site-bound peptidyl-tRNA and P-site-bound deacylated tRNA move to the P and E sites, respectively. Catalyzes the coordinated movement of the two tRNA molecules, the mRNA and conformational changes in the ribosome. In Nitratiruptor sp. (strain SB155-2), this protein is Elongation factor G.